Here is a 100-residue protein sequence, read N- to C-terminus: NADH-quinone oxidoreductase subunit K 2 (100 aa).

3 helical membrane passes run 4–24 (LWWF…GVLL), 28–48 (ILVV…NFIA), and 60–80 (IFAI…LGIL).

It belongs to the complex I subunit 4L family. As to quaternary structure, NDH-1 is composed of 14 different subunits. Subunits NuoA, H, J, K, L, M, N constitute the membrane sector of the complex.

Its subcellular location is the cell inner membrane. The catalysed reaction is a quinone + NADH + 5 H(+)(in) = a quinol + NAD(+) + 4 H(+)(out). In terms of biological role, NDH-1 shuttles electrons from NADH, via FMN and iron-sulfur (Fe-S) centers, to quinones in the respiratory chain. The immediate electron acceptor for the enzyme in this species is believed to be ubiquinone. Couples the redox reaction to proton translocation (for every two electrons transferred, four hydrogen ions are translocated across the cytoplasmic membrane), and thus conserves the redox energy in a proton gradient. This Rhizobium etli (strain CIAT 652) protein is NADH-quinone oxidoreductase subunit K 2.